The sequence spans 278 residues: Large ribosomal subunit protein uL2 (278 aa).

The interval 225–278 (MNPVDHPHGGGEGRTSGGRHPVTPWGKPTKGKKTRANKATDKYIVRSRHQKKKG) is disordered. Positions 269 to 278 (VRSRHQKKKG) are enriched in basic residues.

This sequence belongs to the universal ribosomal protein uL2 family. Part of the 50S ribosomal subunit. Forms a bridge to the 30S subunit in the 70S ribosome.

In terms of biological role, one of the primary rRNA binding proteins. Required for association of the 30S and 50S subunits to form the 70S ribosome, for tRNA binding and peptide bond formation. It has been suggested to have peptidyltransferase activity; this is somewhat controversial. Makes several contacts with the 16S rRNA in the 70S ribosome. This chain is Large ribosomal subunit protein uL2, found in Parvibaculum lavamentivorans (strain DS-1 / DSM 13023 / NCIMB 13966).